The primary structure comprises 179 residues: MAKLHDYYRDQVVNELKTKFNYASVMQVPRIEKITLNMGVGEALTDKKLLDNAVADLTAISGQKPLITKARKSVAGFKIRQGYPIGCKVTLRGERMWEFLERLITIAVPRIRDFRGLSAKSFDGRGNYSMGVREQIIFPEIDYDKVDRVRGLDITITTTAKSDEEGQALLAAFNFPFRK.

This sequence belongs to the universal ribosomal protein uL5 family. In terms of assembly, part of the 50S ribosomal subunit; part of the 5S rRNA/L5/L18/L25 subcomplex. Contacts the 5S rRNA and the P site tRNA. Forms a bridge to the 30S subunit in the 70S ribosome.

Functionally, this is one of the proteins that bind and probably mediate the attachment of the 5S RNA into the large ribosomal subunit, where it forms part of the central protuberance. In the 70S ribosome it contacts protein S13 of the 30S subunit (bridge B1b), connecting the 2 subunits; this bridge is implicated in subunit movement. Contacts the P site tRNA; the 5S rRNA and some of its associated proteins might help stabilize positioning of ribosome-bound tRNAs. The protein is Large ribosomal subunit protein uL5 of Mannheimia succiniciproducens (strain KCTC 0769BP / MBEL55E).